Reading from the N-terminus, the 501-residue chain is ATP synthase subunit alpha (501 aa).

An ATP-binding site is contributed by 169–176 (GDRQTGKT).

Belongs to the ATPase alpha/beta chains family. F-type ATPases have 2 components, CF(1) - the catalytic core - and CF(0) - the membrane proton channel. CF(1) has five subunits: alpha(3), beta(3), gamma(1), delta(1), epsilon(1). CF(0) has three main subunits: a(1), b(2) and c(9-12). The alpha and beta chains form an alternating ring which encloses part of the gamma chain. CF(1) is attached to CF(0) by a central stalk formed by the gamma and epsilon chains, while a peripheral stalk is formed by the delta and b chains.

The protein localises to the cell membrane. It carries out the reaction ATP + H2O + 4 H(+)(in) = ADP + phosphate + 5 H(+)(out). Produces ATP from ADP in the presence of a proton gradient across the membrane. The alpha chain is a regulatory subunit. This Streptococcus equi subsp. equi (strain 4047) protein is ATP synthase subunit alpha.